Here is a 107-residue protein sequence, read N- to C-terminus: Iron-binding protein IscA (107 aa).

3 residues coordinate Fe cation: cysteine 35, cysteine 99, and cysteine 101.

This sequence belongs to the HesB/IscA family. As to quaternary structure, homodimer; may form tetramers and higher multimers. Fe cation is required as a cofactor.

Its function is as follows. Is able to transfer iron-sulfur clusters to apo-ferredoxin. Multiple cycles of [2Fe2S] cluster formation and transfer are observed, suggesting that IscA acts catalytically. Recruits intracellular free iron so as to provide iron for the assembly of transient iron-sulfur cluster in IscU in the presence of IscS, L-cysteine and the thioredoxin reductase system TrxA/TrxB. This Pectobacterium atrosepticum (strain SCRI 1043 / ATCC BAA-672) (Erwinia carotovora subsp. atroseptica) protein is Iron-binding protein IscA.